The primary structure comprises 273 residues: Hydroxyethylthiazole kinase 2 (273 aa).

Position 45 (M45) interacts with substrate. K120 and T173 together coordinate ATP. G200 contributes to the substrate binding site.

It belongs to the Thz kinase family. Requires Mg(2+) as cofactor.

It carries out the reaction 5-(2-hydroxyethyl)-4-methylthiazole + ATP = 4-methyl-5-(2-phosphooxyethyl)-thiazole + ADP + H(+). Its pathway is cofactor biosynthesis; thiamine diphosphate biosynthesis; 4-methyl-5-(2-phosphoethyl)-thiazole from 5-(2-hydroxyethyl)-4-methylthiazole: step 1/1. Functionally, catalyzes the phosphorylation of the hydroxyl group of 4-methyl-5-beta-hydroxyethylthiazole (THZ). The polypeptide is Hydroxyethylthiazole kinase 2 (Leuconostoc mesenteroides subsp. mesenteroides (strain ATCC 8293 / DSM 20343 / BCRC 11652 / CCM 1803 / JCM 6124 / NCDO 523 / NBRC 100496 / NCIMB 8023 / NCTC 12954 / NRRL B-1118 / 37Y)).